The sequence spans 1064 residues: Adenylate cyclase type 4 (1064 aa).

At 1 to 28 (MARLFSPRPPPSEDLFYETYYSLSQQYP) the chain is on the cytoplasmic side. Transmembrane regions (helical) follow at residues 29 to 50 (LLIL…VAWA), 61 to 80 (FLTT…GLAS), 94 to 117 (GLIW…VSAW), 120 to 138 (VSFF…PLGM), 141 to 162 (AAAA…YLGW), and 170 to 190 (LLPQ…VGAY). Topologically, residues 191-582 (HKALMERALR…YRLSALPAFK (392 aa)) are cytoplasmic. The Mg(2+) site is built by aspartate 278, isoleucine 279, and aspartate 322. ATP-binding positions include 278-283 (DIVGFT), 320-322 (LGD), and arginine 366. A disordered region spans residues 498-523 (DSPASTSTPLPEKAFSPQWSLDRSRT). Serine 517 carries the post-translational modification Phosphoserine. Residue threonine 533 is modified to Phosphothreonine. Transmembrane regions (helical) follow at residues 583–604 (YYAA…LVTT), 608–630 (ALAT…CFSE), and 661–684 (VALG…FLPV). The Extracellular segment spans residues 685–707 (SSDCPFLAPNVSSVAFNTSWELP). Asparagine 694 and asparagine 701 each carry an N-linked (GlcNAc...) asparagine glycan. A run of 3 helical transmembrane segments spans residues 708 to 733 (ASLP…SLFL), 741 to 761 (LLLL…SHAW), and 788 to 804 (MGAI…LVLA). The Cytoplasmic portion of the chain corresponds to 805–1064 (RQNEYYCRLD…LTRTGSPSAS (260 aa)). Residues lysine 914, 994–996 (DIW), 1001–1005 (NVASR), and lysine 1041 contribute to the ATP site.

Belongs to the adenylyl cyclase class-4/guanylyl cyclase family. Mg(2+) is required as a cofactor. It depends on Mn(2+) as a cofactor. As to expression, widely distributed.

The protein resides in the cell membrane. It is found in the cytoplasm. It carries out the reaction ATP = 3',5'-cyclic AMP + diphosphate. With respect to regulation, activated by forskolin. Insensitive to calcium/calmodulin. Stimulated by GNAS and by the G-protein beta and gamma subunit complex. Its function is as follows. Catalyzes the formation of the signaling molecule cAMP in response to G-protein signaling. The polypeptide is Adenylate cyclase type 4 (Adcy4) (Rattus norvegicus (Rat)).